A 302-amino-acid chain; its full sequence is Acidic endochitinase (302 aa).

Positions 1-30 (MTNMTLRKHVIYFLFFISCSLSKPSDASRG) are cleaved as a signal peptide. The GH18 domain maps to 31 to 302 (GIAIYWGQNG…GYSSSILASV (272 aa)). 2 cysteine pairs are disulfide-bonded: Cys-49–Cys-96 and Cys-79–Cys-86. Residue Glu-156 is the Proton donor of the active site. A disulfide bridge links Cys-188 with Cys-217.

It belongs to the glycosyl hydrolase 18 family. Chitinase class III subfamily.

The protein resides in the secreted. It localises to the extracellular space. The catalysed reaction is Random endo-hydrolysis of N-acetyl-beta-D-glucosaminide (1-&gt;4)-beta-linkages in chitin and chitodextrins.. Its function is as follows. This protein functions as a defense against chitin containing fungal pathogens. The protein is Acidic endochitinase (CHIB1) of Arabidopsis thaliana (Mouse-ear cress).